Here is a 661-residue protein sequence, read N- to C-terminus: Junctophilin-1 (661 aa).

Residues 1-639 (MTGGRFDFDD…EKEANSGPNS (639 aa)) are Cytoplasmic-facing. MORN repeat units follow at residues 14–36 (YCGG…KGQG), 38–59 (YSGS…SGNT), 60–82 (YQGY…KWMY), 106–128 (YEGT…DGGT), and 129–151 (YQGQ…PYGM). Phosphoserine occurs at positions 157, 216, and 220. The interval 228–247 (SKSSISSKRSSVRSDAAMSR) is disordered. MORN repeat units lie at residues 281 to 303 (YMGE…NGMK) and 304 to 326 (YEGE…DGSK). Residues 433–454 (DAKENPEEKVPEKPPTPKESPH) show a composition bias toward basic and acidic residues. A disordered region spans residues 433–631 (DAKENPEEKV…SNDSCPALEK (199 aa)). Thr-448 bears the Phosphothreonine mark. Ser-452 carries the phosphoserine modification. The residue at position 461 (Thr-461) is a Phosphothreonine. A phosphoserine mark is found at Ser-465, Ser-469, and Ser-475. Over residues 599–613 (VAKESKAEPKAKKSE) the composition is skewed to basic and acidic residues. A helical; Anchor for type IV membrane protein transmembrane segment spans residues 640-660 (IMIVLVMLLNIGLAILFVHFL).

The protein belongs to the junctophilin family. Abundantly expressed in skeletal muscle. Very low levels in heart.

Its subcellular location is the cell membrane. The protein resides in the endoplasmic reticulum membrane. It is found in the sarcoplasmic reticulum membrane. In terms of biological role, junctophilins contribute to the formation of junctional membrane complexes (JMCs) which link the plasma membrane with the endoplasmic or sarcoplasmic reticulum in excitable cells. Provides a structural foundation for functional cross-talk between the cell surface and intracellular calcium release channels. JPH1 contributes to the construction of the skeletal muscle triad by linking the t-tubule (transverse-tubule) and SR (sarcoplasmic reticulum) membranes. The chain is Junctophilin-1 (JPH1) from Homo sapiens (Human).